Reading from the N-terminus, the 519-residue chain is Seed lectin (519 aa).

2 cysteine pairs are disulfide-bonded: Cys249/Cys258 and Cys274/Cys293. Ricin B-type lectin domains follow at residues 261–387 (ETRT…WRVG) and 390–518 (VQPI…WVLF). The stretch at 271 to 311 (DALCVDVAGALTSDGSRLILYPCGQQVNQKWTFHSDGTVRS) is one 1-alpha repeat. A carbohydrate is bound by residues 276–279 (DVAG) and 296–298 (QVN). One copy of the 1-beta repeat lies at 312–352 (LGKCLATNNSKFGNLVVIYDCSKLAAEDISWDVSVGGTIMN). Cys315 and Cys332 are joined by a disulfide. The 1-gamma repeat unit spans residues 356–388 (EDLALTSNKATRSTNLTMEVNTYSASQGWRVGN). N-linked (GlcNAc...) asparagine glycosylation is present at Asn370. The stretch at 401–438 (DDMCLEATDGNTNMWLEECVPNQREQSWALYSDGTIRV) is one 2-alpha repeat. 2 disulfide bridges follow: Cys404/Cys419 and Cys445/Cys464. The stretch at 442–482 (RELCVTASSSTYDNWKVITILNCDGSNNQRWVFLADGSIST) is one 2-beta repeat. A carbohydrate is bound by residues Asp454, 491-494 (DVAR), 505-508 (HRPH), and Asn512. The stretch at 486-513 (QRLAMDVARSDVDLKKIILHRPHGDLNQ) is one 2-gamma repeat.

In the N-terminal section; belongs to the ribosome-inactivating protein family. Type 2 RIP subfamily. In terms of assembly, heterotrimer consisting of Aalpha, Abeta and B chains with Abeta and B being disulfide-linked.

In terms of biological role, seed lectin similar to type 2 ribosome-inactivating proteins. The Aalpha and Abeta chains constitute the rRNA glycosidase domain and the B chain the carbohydrate-binding lectin domain. Is predicted to have no glycosidase activity and, hence, to be non-toxic, due to small changes in both the nucleotide binding and carbohydrate binding capabilities. Binds galactose and derivatives with a preference for the beta-anomeric forms. Binds prophyrins. Has hemagglutinating activity towards rabbit and human erythrocytes. This chain is Seed lectin, found in Trichosanthes anguina (Snake gourd).